The following is a 626-amino-acid chain: MASSCSIRCGSRNILVNAAATFLALLVVLRCFANAEKPSPCQSDVYCRGELLHTIQMASIYKDSKTFVDMKMKRPPDETLKSFREFMERHEQMPTRYQIERFVNDTFDPEGSEFEDWDPDDWTFRPKFLSRILDDDLRNFASELNGIWKMLGRKMKDDVRVNEELYSIIYVPHPVIVPGGRFREFYYWDSYWIVKGLLLSEMYTTVKGMLTNFVSLVDKIGFIPNGGRIYYTMRSQPPMLIPMVDEYLKITHDYEWLENNLYLLEKEFDFWMTNRTVEIEVDGVNYVLARYNEQSSGPRPESYKEDYLTSQSFRTNEEKDNYYSELKTAAESGWDFSSRWFILDGTNKGNLTNLKTRYIIPVDLNSIIYRNAVLLAQYNQRMGNESKVAYYQKRAAEWKRAIQAVLWHDEVGAWLDYDILNDIKRDYFYPTNILPLWTDCYDIAKREEYVSKVLKYLEKNKIMLNLGGIPTTLEHSGEQWDYPNAWPPLQYFVIMALNKTEDPWAQRLAYEISERWVRSNYKAYNETHSMFEKYDATVSGGHGGGGEYEVQLGFGWSNGVIMDLLNRYGDKLTAEDRFVATFHSNSTPQPVVVSTAGQVMTGILALVISLAAGFIGKMRCANNAAQ.

Positions methionine 1–alanine 35 are cleaved as a signal peptide. At glutamate 36 to threonine 595 the chain is on the extracellular side. Residue asparagine 104 is glycosylated (N-linked (GlcNAc...) asparagine). Substrate is bound by residues arginine 181, tryptophan 188–aspartate 189, asparagine 225, and arginine 234–glutamine 236. An N-linked (GlcNAc...) asparagine glycan is attached at asparagine 274. Substrate-binding positions include arginine 299–glutamate 301 and glycine 333. Catalysis depends on aspartate 335, which acts as the Proton donor/acceptor. N-linked (GlcNAc...) asparagine glycans are attached at residues asparagine 350, asparagine 384, asparagine 498, and asparagine 525. The active-site Proton donor/acceptor is the glutamate 532. Glutamate 547 contributes to the substrate binding site. Residues alanine 596 to glycine 616 form a helical membrane-spanning segment. Residues lysine 617–glutamine 626 lie on the Cytoplasmic side of the membrane.

Belongs to the glycosyl hydrolase 37 family. In terms of assembly, monomer. In terms of processing, glycosylated; contains 3.1% carbohydrates.

The protein resides in the membrane. It catalyses the reaction alpha,alpha-trehalose + H2O = alpha-D-glucose + beta-D-glucose. With respect to regulation, inhibited by sodium, potassium and ammonium ions, and by TEMED. The sequence is that of Trehalase from Apis mellifera (Honeybee).